A 1019-amino-acid chain; its full sequence is Mediator of replication checkpoint protein 1 (1019 aa).

Disordered stretches follow at residues 1 to 33, 105 to 143, 166 to 202, 261 to 290, 443 to 683, and 965 to 1019; these read MASLDENADELHRMDSSDEASINDDQEDILDTP, QGGKSSLQKKEVEQIETQEGGDNAKGSPSSENKDSDRNS, NSATSHSKSDNLDSESADDSDLADESELSKKYTSDRK, EEEANSTEPPNVEKEEPKPSVDRSTGIVNS, IQGE…SKTF, and TQRP…SDFD. The span at 17-30 shows a compositional bias: acidic residues; that stretch reads SDEASINDDQEDIL. The span at 177–191 shows a compositional bias: acidic residues; it reads LDSESADDSDLADES. Composition is skewed to basic and acidic residues over residues 192–202, 271–281, and 454–468; these read ELSKKYTSDRK, NVEKEEPKPSV, and LERARNDAEKIRQLE. Over residues 476–486 the composition is skewed to acidic residues; it reads DEGELNDEEEV. Residues 487-503 show a composition bias toward polar residues; the sequence is ISSSNTPSTKAKTTNKV. Over residues 556–580 the composition is skewed to basic and acidic residues; sequence MIRDSFDRLSSESIKDSQKTEELHD. Composition is skewed to polar residues over residues 590-607 and 630-658; these read QSTSLYVQNSQPSASQLT and NTSSTQPSQVDSLVPTQLDSTIPTQIDSV. Serine 604 bears the Phosphoserine mark. Phosphothreonine is present on threonine 645. Basic and acidic residues predominate over residues 671 to 681; the sequence is EERRESRRDSK.

In terms of assembly, interacts with cds1. Post-translationally, phosphorylated by rad3 and tel1.

Its subcellular location is the nucleus. In terms of biological role, component of the replisome and is required for rad3-dependent activation of the checkpoint kinase cds1 in response to replication fork arrest. Phosphorylation allows it to mediate the activation of cds1. The protein is Mediator of replication checkpoint protein 1 (mrc1) of Schizosaccharomyces pombe (strain 972 / ATCC 24843) (Fission yeast).